The primary structure comprises 322 residues: tRNA uridine(34) hydroxylase (322 aa).

In terms of domain architecture, Rhodanese spans 126–220; it reads LAEDTVVIDA…YGKDPEVKGE (95 aa). Catalysis depends on C180, which acts as the Cysteine persulfide intermediate.

This sequence belongs to the TrhO family.

It carries out the reaction uridine(34) in tRNA + AH2 + O2 = 5-hydroxyuridine(34) in tRNA + A + H2O. In terms of biological role, catalyzes oxygen-dependent 5-hydroxyuridine (ho5U) modification at position 34 in tRNAs. In Shouchella clausii (strain KSM-K16) (Alkalihalobacillus clausii), this protein is tRNA uridine(34) hydroxylase.